Here is a 777-residue protein sequence, read N- to C-terminus: uncharacterized protein (777 aa).

8 disordered regions span residues 1 to 101 (MNNN…NLSN), 128 to 150 (SYNN…NDDN), 219 to 267 (HHIH…NNMN), 334 to 366 (SLPF…GIDD), 391 to 466 (ISNS…ATIS), 529 to 577 (KNLN…NNKG), 590 to 622 (LAQE…ISTI), and 713 to 751 (EKQG…KWKP). 2 stretches are compositionally biased toward low complexity: residues 128–147 (SYNN…NNIN) and 243–265 (NNNN…NHNN). Polar residues predominate over residues 334–343 (SLPFSSLSDN). Residues 344 to 366 (NGDDDDDGIDDGIDDGIDDGIDD) show a composition bias toward acidic residues. The segment covering 391–407 (ISNSFHQNQSPCNNSFK) has biased composition (polar residues). Low complexity-rich tracts occupy residues 408–466 (NNNN…ATIS) and 532–574 (NNNN…NNKN). The segment covering 597-606 (EQNKTKKELE) has biased composition (basic and acidic residues). Composition is skewed to acidic residues over residues 607 to 620 (EVKE…EEIS) and 718 to 730 (DDPE…DSDS). Low complexity predominate over residues 731-740 (DSNSNSDSSD).

This is an uncharacterized protein from Dictyostelium discoideum (Social amoeba).